Consider the following 36-residue polypeptide: Photosystem II reaction center protein X (36 aa).

The chain crosses the membrane as a helical span at residues 9 to 29; the sequence is LWSIFWGGVVVALGAAALTAI.

It belongs to the PsbX family. Type 1 subfamily. In terms of assembly, PSII is composed of 1 copy each of membrane proteins PsbA, PsbB, PsbC, PsbD, PsbE, PsbF, PsbH, PsbI, PsbJ, PsbK, PsbL, PsbM, PsbT, PsbX, Psb30/Ycf12, peripheral proteins PsbO, CyanoQ (PsbQ), PsbU, PsbV and a large number of cofactors. It forms dimeric complexes.

It is found in the cell inner membrane. Its function is as follows. Involved in the binding and/or turnover of quinones at the Q(B) site of photosystem II (PSII). PSII is a light-driven water plastoquinone oxidoreductase, using light energy to abstract electrons from H(2)O, generating a proton gradient subsequently used for ATP formation. In Gloeobacter violaceus (strain ATCC 29082 / PCC 7421), this protein is Photosystem II reaction center protein X.